A 267-amino-acid chain; its full sequence is 5'-nucleotidase SurE (267 aa).

D9, D10, S40, and N97 together coordinate a divalent metal cation.

It belongs to the SurE nucleotidase family. A divalent metal cation serves as cofactor.

The protein resides in the cytoplasm. The enzyme catalyses a ribonucleoside 5'-phosphate + H2O = a ribonucleoside + phosphate. Nucleotidase that shows phosphatase activity on nucleoside 5'-monophosphates. The protein is 5'-nucleotidase SurE of Helicobacter pylori (strain HPAG1).